Here is a 126-residue protein sequence, read N- to C-terminus: Large ribosomal subunit protein bL12 (126 aa).

Residues 36 to 55 (APAPAAAPAAGGDQGGAEAA) are compositionally biased toward low complexity. Residues 36-57 (APAPAAAPAAGGDQGGAEAAEQ) form a disordered region.

This sequence belongs to the bacterial ribosomal protein bL12 family. Homodimer. Part of the ribosomal stalk of the 50S ribosomal subunit. Forms a multimeric L10(L12)X complex, where L10 forms an elongated spine to which 2 to 4 L12 dimers bind in a sequential fashion. Binds GTP-bound translation factors.

Functionally, forms part of the ribosomal stalk which helps the ribosome interact with GTP-bound translation factors. Is thus essential for accurate translation. This chain is Large ribosomal subunit protein bL12, found in Natranaerobius thermophilus (strain ATCC BAA-1301 / DSM 18059 / JW/NM-WN-LF).